An 83-amino-acid chain; its full sequence is Toxin To12 (83 aa).

The first 19 residues, 1–19 (MKGLILFICGFMMIGVILA), serve as a signal peptide directing secretion. The 63-residue stretch at 20–82 (KEGYPMDHEG…VWDYYNNKCG (63 aa)) folds into the LCN-type CS-alpha/beta domain. 4 disulfide bridges follow: cysteine 30-cysteine 81, cysteine 34-cysteine 57, cysteine 42-cysteine 62, and cysteine 46-cysteine 64. Cysteine 81 bears the Cysteine amide mark.

The protein belongs to the long (4 C-C) scorpion toxin superfamily. Sodium channel inhibitor family. Beta subfamily. As to expression, expressed by the venom gland.

It is found in the secreted. Beta toxins bind voltage-independently at site-4 of sodium channels (Nav) and shift the voltage of activation toward more negative potentials thereby affecting sodium channel activation and promoting spontaneous and repetitive firing. The polypeptide is Toxin To12 (Tityus obscurus (Amazonian scorpion)).